The primary structure comprises 559 residues: Tissue-type plasminogen activator (559 aa).

An N-terminal signal peptide occupies residues 1–17; sequence MKGELLCVLLLCGVAFT. Residues 18–29 constitute a propeptide that is removed on maturation; sequence LPDQGIHRRFRR. The propeptide at 30–32 is removed by plasmin; the sequence is GAR. The Fibronectin type-I domain maps to 36–78; sequence ATCRDEQTQTTYQQHQSWLRPMLRGNRVEYCRCNSGLAQCHSV. 17 cysteine pairs are disulfide-bonded: Cys38-Cys68, Cys66-Cys75, Cys83-Cys94, Cys88-Cys105, Cys107-Cys116, Cys124-Cys205, Cys145-Cys187, Cys176-Cys200, Cys213-Cys294, Cys234-Cys276, Cys265-Cys289, Cys297-Cys428, Cys340-Cys356, Cys348-Cys417, Cys442-Cys516, Cys474-Cys490, and Cys506-Cys534. The segment at 39–49 is important for binding to annexin A2; that stretch reads RDEQTQTTYQQ. The 39-residue stretch at 79-117 folds into the EGF-like domain; sequence PVRSCSEPRCFNGGTCQQALYFSDFVCQCPDGFVGKRCD. 2 consecutive Kringle domains span residues 124–205 and 213–294; these read CFEG…TPAC and CYVG…MSPC. Asn149 carries N-linked (GlcNAc...) asparagine glycosylation. The Peptidase S1 domain occupies 309-558; it reads IKGGLFTDIT…YLNWIQDNMK (250 aa). Catalysis depends on charge relay system residues His355 and Asp404. A glycan (N-linked (GlcNAc...) asparagine) is linked at Asn481. Ser510 functions as the Charge relay system in the catalytic mechanism.

It belongs to the peptidase S1 family. Heterodimer of chain A and chain B held by a disulfide bond. Binds to fibrin with high affinity. This interaction leads to an increase in the catalytic efficiency of the enzyme due to an increase in affinity for plasminogen. Similarly, binding to heparin increases the activation of plasminogen. Binds to annexin A2, cytokeratin-8, fibronectin and laminin. Binds to mannose receptor and the low-density lipoprotein receptor-related protein (LRP1); these proteins are involved in TPA clearance. Binds LRP1B; binding is followed by internalization and degradation. Forms heterodimer with SERPINA5. Interacts with SERPINE1. In complex with SERPINE1, interacts with SORL1. The single chain, almost fully active enzyme, can be further processed into a two-chain fully active form by a cleavage after Arg-308 catalyzed by plasmin, tissue kallikrein or factor Xa.

It localises to the secreted. It is found in the extracellular space. It carries out the reaction Specific cleavage of Arg-|-Val bond in plasminogen to form plasmin.. Inhibited by SERPINA5. Inhibited by SERPINE1. In terms of biological role, converts the abundant, but inactive, zymogen plasminogen to plasmin by hydrolyzing a single Arg-Val bond in plasminogen. By controlling plasmin-mediated proteolysis, it plays an important role in tissue remodeling and degradation, in cell migration and many other physiopathological events. During oocyte activation, plays a role in cortical granule reaction in the zona reaction, which contributes to the block to polyspermy. The protein is Tissue-type plasminogen activator (Plat) of Rattus norvegicus (Rat).